We begin with the raw amino-acid sequence, 226 residues long: Endonuclease V (226 aa).

The Mg(2+) site is built by Asp43 and Asp111.

It belongs to the endonuclease V family. Requires Mg(2+) as cofactor.

Its subcellular location is the cytoplasm. It carries out the reaction Endonucleolytic cleavage at apurinic or apyrimidinic sites to products with a 5'-phosphate.. In terms of biological role, DNA repair enzyme involved in the repair of deaminated bases. Selectively cleaves double-stranded DNA at the second phosphodiester bond 3' to a deoxyinosine leaving behind the intact lesion on the nicked DNA. This chain is Endonuclease V, found in Nocardia farcinica (strain IFM 10152).